The chain runs to 89 residues: Small ribosomal subunit protein uS14 (89 aa).

Belongs to the universal ribosomal protein uS14 family. As to quaternary structure, part of the 30S ribosomal subunit. Contacts proteins S3 and S10.

In terms of biological role, binds 16S rRNA, required for the assembly of 30S particles and may also be responsible for determining the conformation of the 16S rRNA at the A site. This is Small ribosomal subunit protein uS14 from Shouchella clausii (strain KSM-K16) (Alkalihalobacillus clausii).